A 1025-amino-acid polypeptide reads, in one-letter code: Multidrug resistance protein MdtC (1025 aa).

A run of 12 helical transmembrane segments spans residues 3–23, 333–353, 360–380, 387–407, 431–451, 463–483, 528–548, 853–873, 875–895, 897–917, 953–973, and 984–1004; these read FFALFIYRPVATILLSVAITL, EVEQTLIISVALVILVVFLFL, IIPAVSVPVSLIGTFAAMYLC, LSLMALTIATGFVVDDAIVVL, VGFTVLSMSLSLVAVFLPLLL, FAVTLSVAIGISLLVSLTLTP, LVGVVLLGTIALNIWLYISIP, VILIIAAIATVYIVLGILYES, VHPLTILSTLPSAGVGALLAL, LFNAPFSLIALIGIMLLIGIV, PIMMTTLAALFGALPLVLSGG, and ITIVGGLVMSQLLTLYTTPVV.

This sequence belongs to the resistance-nodulation-cell division (RND) (TC 2.A.6) family. MdtC subfamily. In terms of assembly, part of a tripartite efflux system composed of MdtA, MdtB and MdtC. MdtC forms a heteromultimer with MdtB.

It localises to the cell inner membrane. In terms of biological role, the MdtABC tripartite complex confers resistance against novobiocin and deoxycholate. This Escherichia coli (strain K12 / MC4100 / BW2952) protein is Multidrug resistance protein MdtC.